We begin with the raw amino-acid sequence, 368 residues long: Glutamate 5-kinase (368 aa).

ATP is bound at residue Lys-13. Substrate-binding residues include Ser-54, Asp-141, and Asn-153. 173–174 (SD) contacts ATP. Residues 278-355 (KGSLRLDAGA…DEIPEILGYP (78 aa)) enclose the PUA domain.

Belongs to the glutamate 5-kinase family.

The protein localises to the cytoplasm. The enzyme catalyses L-glutamate + ATP = L-glutamyl 5-phosphate + ADP. Its pathway is amino-acid biosynthesis; L-proline biosynthesis; L-glutamate 5-semialdehyde from L-glutamate: step 1/2. In terms of biological role, catalyzes the transfer of a phosphate group to glutamate to form L-glutamate 5-phosphate. This is Glutamate 5-kinase from Jannaschia sp. (strain CCS1).